Consider the following 76-residue polypeptide: RNA-binding protein KhpA (76 aa).

The KH domain occupies 29–76 (QNIIELRVSPKDVGKVIGKNGRIAKSLRAILTAASVKAGKNFSLEIID).

This sequence belongs to the KhpA RNA-binding protein family. In terms of assembly, forms a complex with KhpB.

Its subcellular location is the cytoplasm. Functionally, a probable RNA chaperone. Forms a complex with KhpB which binds to cellular RNA and controls its expression. Plays a role in peptidoglycan (PG) homeostasis and cell length regulation. This Leptospira interrogans serogroup Icterohaemorrhagiae serovar copenhageni (strain Fiocruz L1-130) protein is RNA-binding protein KhpA.